Consider the following 311-residue polypeptide: uncharacterized protein (311 aa).

A compositionally biased stretch (polar residues) spans Met1 to Thr12. Disordered regions lie at residues Met1 to His44 and Glu205 to His268. The segment covering Thr35–His44 has biased composition (basic and acidic residues).

It belongs to the HHV-5 HKLF1 family.

This is an uncharacterized protein from Human cytomegalovirus (strain AD169) (HHV-5).